We begin with the raw amino-acid sequence, 122 residues long: Large ribosomal subunit protein bL12 (122 aa).

The interval 94 to 122 is disordered; sequence GNVKEGLSKEDAEEMKEKLEEAGATVELK. Residues 99-114 show a composition bias toward basic and acidic residues; it reads GLSKEDAEEMKEKLEE.

This sequence belongs to the bacterial ribosomal protein bL12 family. In terms of assembly, homodimer. Part of the ribosomal stalk of the 50S ribosomal subunit. Forms a multimeric L10(L12)X complex, where L10 forms an elongated spine to which 2 to 4 L12 dimers bind in a sequential fashion. Binds GTP-bound translation factors.

Forms part of the ribosomal stalk which helps the ribosome interact with GTP-bound translation factors. Is thus essential for accurate translation. The chain is Large ribosomal subunit protein bL12 from Halanaerobium praevalens.